A 319-amino-acid polypeptide reads, in one-letter code: Acetyl-coenzyme A carboxylase carboxyl transferase subunit alpha (319 aa).

Residues 35–296 (NLDEEVQRLR…KAQLLIDLAE (262 aa)) enclose the CoA carboxyltransferase C-terminal domain.

The protein belongs to the AccA family. As to quaternary structure, acetyl-CoA carboxylase is a heterohexamer composed of biotin carboxyl carrier protein (AccB), biotin carboxylase (AccC) and two subunits each of ACCase subunit alpha (AccA) and ACCase subunit beta (AccD).

The protein resides in the cytoplasm. The enzyme catalyses N(6)-carboxybiotinyl-L-lysyl-[protein] + acetyl-CoA = N(6)-biotinyl-L-lysyl-[protein] + malonyl-CoA. Its pathway is lipid metabolism; malonyl-CoA biosynthesis; malonyl-CoA from acetyl-CoA: step 1/1. In terms of biological role, component of the acetyl coenzyme A carboxylase (ACC) complex. First, biotin carboxylase catalyzes the carboxylation of biotin on its carrier protein (BCCP) and then the CO(2) group is transferred by the carboxyltransferase to acetyl-CoA to form malonyl-CoA. In Photorhabdus laumondii subsp. laumondii (strain DSM 15139 / CIP 105565 / TT01) (Photorhabdus luminescens subsp. laumondii), this protein is Acetyl-coenzyme A carboxylase carboxyl transferase subunit alpha.